Here is a 305-residue protein sequence, read N- to C-terminus: Phosphoinositol dihydroceramide synthase (305 aa).

An N-terminal signal peptide occupies residues 1 to 23 (MPSKKETLTVIVIMALFLLLTAA). Cys-24 carries N-palmitoyl cysteine lipidation. The S-diacylglycerol cysteine moiety is linked to residue Cys-24. The next 6 membrane-spanning stretches (helical) occupy residues 41-61 (LFFAGLPTRKLAVALLPFAIF), 117-137 (VFAGIFYLCWVPVPILFGLCL), 149-169 (FALVFLFVNLIGFAGYYIHPA), 216-236 (FAAVPSLHAAYMVVALVYAII), 241-261 (WYVIALFSVIMAGIWGTAIYS), and 266-286 (IIDVLLGISCALLGWLFFEYG).

The protein localises to the membrane. The catalysed reaction is N-(2-hydroxy-fatty acyl)-dihydroceramide + a 1,2-diacyl-sn-glycero-3-phospho-(1D-myo-inositol) = inositol-1-phospho-N-(2-hydroxy-fatty acyl)-dihydroceramide + a 1,2-diacyl-sn-glycerol. Its function is as follows. Catalyzes the addition of a phosphorylinositol group onto dihydroceramide to form phosphoinositol dihydroceramide (PI-DHC), an essential step in sphingolipid biosynthesis. The chain is Phosphoinositol dihydroceramide synthase from Bacteroides thetaiotaomicron (strain ATCC 29148 / DSM 2079 / JCM 5827 / CCUG 10774 / NCTC 10582 / VPI-5482 / E50).